Here is a 423-residue protein sequence, read N- to C-terminus: GTPase Obg (423 aa).

An Obg domain is found at 1 to 158 (MFIDTARIYI…MWVRLELKLL (158 aa)). In terms of domain architecture, OBG-type G spans 159 to 329 (ADVGLIGFPN…LLDKTIEILS (171 aa)). GTP is bound by residues 165–172 (GFPNAGKS), 190–194 (FTTLT), 211–214 (DIPG), 281–284 (NKID), and 310–312 (SAL). Mg(2+) contacts are provided by Ser172 and Thr192. In terms of domain architecture, OCT spans 346 to 423 (TPPEEEETLN…VRDFEFEYYE (78 aa)).

The protein belongs to the TRAFAC class OBG-HflX-like GTPase superfamily. OBG GTPase family. In terms of assembly, monomer. Mg(2+) serves as cofactor.

It is found in the cytoplasm. Its function is as follows. An essential GTPase which binds GTP, GDP and possibly (p)ppGpp with moderate affinity, with high nucleotide exchange rates and a fairly low GTP hydrolysis rate. Plays a role in control of the cell cycle, stress response, ribosome biogenesis and in those bacteria that undergo differentiation, in morphogenesis control. This is GTPase Obg from Thermoanaerobacter pseudethanolicus (strain ATCC 33223 / 39E) (Clostridium thermohydrosulfuricum).